The following is a 172-amino-acid chain: Putative methyltransferase Mtx subunit A (172 aa).

Belongs to the MtrA family. In terms of assembly, may be part of a complex composed of 3 subunits; MtxA, MtxH and MtxX.

The protein is Putative methyltransferase Mtx subunit A (mtxA) of Methanosarcina mazei (strain ATCC BAA-159 / DSM 3647 / Goe1 / Go1 / JCM 11833 / OCM 88) (Methanosarcina frisia).